Here is a 59-residue protein sequence, read N- to C-terminus: Sec-independent protein translocase protein TatA (59 aa).

Residues 1-21 traverse the membrane as a helical segment; that stretch reads MGRLGLTEILVIVGIVILLFG.

The protein belongs to the TatA/E family. In terms of assembly, forms a complex with TatC.

It is found in the cell inner membrane. Its function is as follows. Part of the twin-arginine translocation (Tat) system that transports large folded proteins containing a characteristic twin-arginine motif in their signal peptide across membranes. TatA could form the protein-conducting channel of the Tat system. This Flavobacterium johnsoniae (strain ATCC 17061 / DSM 2064 / JCM 8514 / BCRC 14874 / CCUG 350202 / NBRC 14942 / NCIMB 11054 / UW101) (Cytophaga johnsonae) protein is Sec-independent protein translocase protein TatA.